The primary structure comprises 338 residues: Limbic system-associated membrane protein (338 aa).

A signal peptide spans 1–28; the sequence is MVGRVQPDRKQLPLVLLRLLCLLPTGLP. Ig-like C2-type domains are found at residues 29 to 122, 132 to 214, and 219 to 304; these read VRSV…PKTS, PKIS…VKVT, and PTIT…ASLV. N-linked (GlcNAc...) asparagine glycosylation is found at N40 and N66. A disulfide bond links C53 and C111. Y94 is subject to Phosphotyrosine. N-linked (GlcNAc...) asparagine glycans are attached at residues N136 and N148. Intrachain disulfides connect C153–C197 and C239–C290. 3 N-linked (GlcNAc...) asparagine glycosylation sites follow: N279, N287, and N300. N315 carries the GPI-anchor amidated asparagine; alternate lipid modification. N315 carries N-linked (GlcNAc...) asparagine; alternate glycosylation. A propeptide spans 316–338 (removed in mature form); the sequence is GSISLAVPLWLLAASLFCLLSKC.

Belongs to the immunoglobulin superfamily. IgLON family. Expressed mostly by neurons comprising limbic-associated cortical and subcortical regions that function in cognition, emotion, memory, and learning.

The protein resides in the cell membrane. In terms of biological role, mediates selective neuronal growth and axon targeting. Contributes to the guidance of developing axons and remodeling of mature circuits in the limbic system. Essential for normal growth of the hippocampal mossy fiber projection. This Rattus norvegicus (Rat) protein is Limbic system-associated membrane protein (Lsamp).